A 394-amino-acid polypeptide reads, in one-letter code: Stearoyl-[acyl-carrier-protein] 9-desaturase 1, chloroplastic (394 aa).

The transit peptide at 1–37 directs the protein to the chloroplast; it reads MVMAMDRIALFSSSSSVYHHGSSHSHGSKSSRVFTIR. Fe cation is bound by residues glutamate 135, glutamate 173, histidine 176, glutamate 226, glutamate 259, and histidine 262.

It belongs to the fatty acid desaturase type 2 family. Homodimer. Fe(2+) serves as cofactor. In terms of tissue distribution, ubiquitously expressed.

Its subcellular location is the plastid. The protein resides in the chloroplast. The enzyme catalyses octadecanoyl-[ACP] + 2 reduced [2Fe-2S]-[ferredoxin] + O2 + 2 H(+) = (9Z)-octadecenoyl-[ACP] + 2 oxidized [2Fe-2S]-[ferredoxin] + 2 H2O. It participates in lipid metabolism; fatty acid metabolism. Its function is as follows. Converts stearoyl-ACP to oleoyl-ACP by introduction of a cis double bond between carbons 9 and 10 of the acyl chain. This chain is Stearoyl-[acyl-carrier-protein] 9-desaturase 1, chloroplastic (S-ACP-DES1), found in Arabidopsis thaliana (Mouse-ear cress).